The following is a 775-amino-acid chain: DNA polymerase (775 aa).

It belongs to the DNA polymerase type-B family.

The enzyme catalyses DNA(n) + a 2'-deoxyribonucleoside 5'-triphosphate = DNA(n+1) + diphosphate. The polypeptide is DNA polymerase (pol) (Thermococcus sp. (strain 9oN-7)).